The sequence spans 445 residues: Exodeoxyribonuclease 7 large subunit (445 aa).

This sequence belongs to the XseA family. In terms of assembly, heterooligomer composed of large and small subunits.

It localises to the cytoplasm. It carries out the reaction Exonucleolytic cleavage in either 5'- to 3'- or 3'- to 5'-direction to yield nucleoside 5'-phosphates.. Bidirectionally degrades single-stranded DNA into large acid-insoluble oligonucleotides, which are then degraded further into small acid-soluble oligonucleotides. The sequence is that of Exodeoxyribonuclease 7 large subunit from Xanthomonas euvesicatoria pv. vesicatoria (strain 85-10) (Xanthomonas campestris pv. vesicatoria).